The following is a 317-amino-acid chain: Lipopolysaccharide heptosyltransferase 1 (317 aa).

Thr-187, Thr-188, Lys-192, Glu-222, Met-242, Asp-261, Thr-262, Gly-263, and His-266 together coordinate ADP-L-glycero-beta-D-manno-heptose.

It belongs to the glycosyltransferase 9 family.

The protein localises to the cell inner membrane. The enzyme catalyses an alpha-Kdo-(2-&gt;4)-alpha-Kdo-(2-&gt;6)-lipid A + ADP-L-glycero-beta-D-manno-heptose = an L-alpha-D-Hep-(1-&gt;5)-[alpha-Kdo-(2-&gt;4)]-alpha-Kdo-(2-&gt;6)-lipid A + ADP + H(+). The protein operates within bacterial outer membrane biogenesis; LPS core biosynthesis. Glycosyltransferase involved in the biosynthesis of the core oligosaccharide region of lipopolysaccharide (LPS). Catalyzes the addition of the first heptose unit to one 3-deoxy-D-manno-octulosonic acid (Kdo) residue of the Kdo2-lipid A module. The sequence is that of Lipopolysaccharide heptosyltransferase 1 from Salmonella typhimurium (strain LT2 / SGSC1412 / ATCC 700720).